A 230-amino-acid chain; its full sequence is Small ribosomal subunit protein uS3 (230 aa).

Positions 39–107 (VRNYLRQKLA…PVHVNIEEIR (69 aa)) constitute a KH type-2 domain. The disordered stretch occupies residues 210–230 (SSKPEHESKQRKAGRRNAAAN).

It belongs to the universal ribosomal protein uS3 family. Part of the 30S ribosomal subunit. Forms a tight complex with proteins S10 and S14.

Binds the lower part of the 30S subunit head. Binds mRNA in the 70S ribosome, positioning it for translation. This chain is Small ribosomal subunit protein uS3, found in Neisseria meningitidis serogroup C (strain 053442).